We begin with the raw amino-acid sequence, 379 residues long: Alanine racemase (379 aa).

Residue Lys-37 is the Proton acceptor; specific for D-alanine of the active site. Position 37 is an N6-(pyridoxal phosphate)lysine (Lys-37). Arg-137 provides a ligand contact to substrate. Tyr-269 serves as the catalytic Proton acceptor; specific for L-alanine. Position 317 (Met-317) interacts with substrate.

It belongs to the alanine racemase family. It depends on pyridoxal 5'-phosphate as a cofactor.

It carries out the reaction L-alanine = D-alanine. It participates in amino-acid biosynthesis; D-alanine biosynthesis; D-alanine from L-alanine: step 1/1. In terms of biological role, catalyzes the interconversion of L-alanine and D-alanine. May also act on other amino acids. This chain is Alanine racemase (alr), found in Geobacter sp. (strain M21).